Consider the following 148-residue polypeptide: Gag-Pol polyprotein (148 aa).

An Integrase catalytic domain is found at 1 to 64; sequence IPYNPQSQGV…SAGERIIDII (64 aa). Residue E12 coordinates Mg(2+). A DNA-binding region (integrase-type) is located at residues 83 to 130; sequence FRVYYRDSRDPIWKGPAKLLWKGEGAVVIQDNSDIKVVPRRKVKIIRD.

In terms of assembly, homotetramer; may further associate as a homohexadecamer. Part of the pre-integration complex (PIC) which is composed of viral genome, matrix protein, Vpr and integrase. Interacts with human SMARCB1/INI1 and human PSIP1/LEDGF isoform 1. Interacts with human KPNA3; this interaction might play a role in nuclear import of the pre-integration complex. Interacts with human NUP153; this interaction might play a role in nuclear import of the pre-integration complex. Post-translationally, specific enzymatic cleavages by the viral protease yield mature proteins.

Catalyzes viral DNA integration into the host chromosome, by performing a series of DNA cutting and joining reactions. This enzyme activity takes place after virion entry into a cell and reverse transcription of the RNA genome in dsDNA. The first step in the integration process is 3' processing. This step requires a complex comprising the viral genome, matrix protein, Vpr and integrase. This complex is called the pre-integration complex (PIC). The integrase protein removes 2 nucleotides from each 3' end of the viral DNA, leaving recessed CA OH's at the 3' ends. In the second step, the PIC enters cell nucleus. This process is mediated through integrase and Vpr proteins, and allows the virus to infect a non dividing cell. This ability to enter the nucleus is specific of lentiviruses, other retroviruses cannot and rely on cell division to access cell chromosomes. In the third step, termed strand transfer, the integrase protein joins the previously processed 3' ends to the 5' ends of strands of target cellular DNA at the site of integration. The 5'-ends are produced by integrase-catalyzed staggered cuts, 5 bp apart. A Y-shaped, gapped, recombination intermediate results, with the 5'-ends of the viral DNA strands and the 3' ends of target DNA strands remaining unjoined, flanking a gap of 5 bp. The last step is viral DNA integration into host chromosome. This involves host DNA repair synthesis in which the 5 bp gaps between the unjoined strands are filled in and then ligated. Since this process occurs at both cuts flanking the HIV genome, a 5 bp duplication of host DNA is produced at the ends of HIV-1 integration. Alternatively, Integrase may catalyze the excision of viral DNA just after strand transfer, this is termed disintegration. The protein is Gag-Pol polyprotein (gag-pol) of Homo sapiens (Human).